We begin with the raw amino-acid sequence, 267 residues long: Undecaprenyl-diphosphatase 1 (267 aa).

The next 8 helical transmembrane spans lie at 6 to 26 (VLVV…AAGL), 41 to 60 (AALS…IYFW), 83 to 103 (HLLL…WLVL), 109 to 129 (LVGQ…LWGC), 142 to 162 (MSWV…VPGV), 185 to 205 (FSML…FWGL), 217 to 237 (LLMA…GMMA), and 244 to 264 (FVPF…LVYF).

It belongs to the UppP family.

It is found in the cell inner membrane. The catalysed reaction is di-trans,octa-cis-undecaprenyl diphosphate + H2O = di-trans,octa-cis-undecaprenyl phosphate + phosphate + H(+). In terms of biological role, catalyzes the dephosphorylation of undecaprenyl diphosphate (UPP). Confers resistance to bacitracin. The polypeptide is Undecaprenyl-diphosphatase 1 (Paramagnetospirillum magneticum (strain ATCC 700264 / AMB-1) (Magnetospirillum magneticum)).